A 798-amino-acid polypeptide reads, in one-letter code: Peroxisome proliferator-activated receptor gamma coactivator 1-alpha (798 aa).

Lys-79 carries the N6-acetyllysine modification. The segment at 100–140 is disordered; sequence PVDEDGLPSFDALTDGDVTTDNEASPSSMPDGTPPPQEAEE. Over residues 116 to 129 the composition is skewed to polar residues; the sequence is DVTTDNEASPSSMP. An LXXLL motif motif is present at residues 144–148; the sequence is LKKLL. Position 146 is an N6-acetyllysine (Lys-146). Thr-178 is subject to Phosphothreonine; by AMPK. Lys-184 is modified (N6-acetyllysine). The disordered stretch occupies residues 213–277; the sequence is YLTTNDDPPH…NDPKGSPFEN (65 aa). Basic and acidic residues predominate over residues 219-237; sequence DPPHTKPTENRNSSRDKCT. N6-acetyllysine is present on residues Lys-254, Lys-271, Lys-278, and Lys-321. Positions 290-351 are disordered; that stretch reads GTAGLTPPTT…NNSTKKGPEQ (62 aa). Residues 293 to 339 are interaction with PPARG; the sequence is GLTPPTTPPHKANQDNPFRASPKLKSSCKTVVPPPSKKPRYSESSGT. Polar residues predominate over residues 334–346; it reads SESSGTQGNNSTK. 4 positions are modified to N6-acetyllysine: Lys-347, Lys-413, Lys-442, and Lys-451. The tract at residues 350-798 is mediates interaction with RNF34; sequence EQSELYAQLS…LKEAQRSLRR (449 aa). Phosphoserine; by AMPK is present on Ser-539. 3 disordered regions span residues 542 to 599, 613 to 639, and 650 to 669; these read SFNS…SSRS, HRNS…SYEE, and YRRE…ERQR. A compositionally biased stretch (basic residues) spans 563–578; that stretch reads QRMRSRSRSFSRHRSC. A compositionally biased stretch (low complexity) spans 579–599; that stretch reads SRSPYSRSRSRSPGSRSSSRS. The span at 622–631 shows a compositional bias: basic residues; sequence SRSRSPYSRR. Residues 677 to 753 enclose the RRM domain; the sequence is RVIYVGKIRP…TDFELYFCGR (77 aa). 2 positions are modified to N6-acetyllysine: Lys-758 and Lys-779.

In terms of assembly, homooligomer. Interacts with MYBBP1A; inhibits MYBBP1A transcriptional activation. Interacts with PRDM16, LPIN1 and PML. Interacts (via LXXLL motif) with RORA and RORC (via AF-2 motif); activates RORA and RORC transcriptional activation. Interacts with LRPPRC. Interacts with FOXO1. Interacts with NR5A2. Post-translationally, phosphorylation by AMPK in skeletal muscle increases activation of its own promoter. Phosphorylated by CLK2. Heavily acetylated by KAT2A/GCN5 under conditions of high nutrients, leading to inactivation of PPARGC1A. Deacetylated by SIRT1 in low nutrients/high NAD conditions, leading to its activation. In terms of processing, ubiquitinated. Ubiquitination by RNF34 induces proteasomal degradation. In terms of tissue distribution, heart, skeletal muscle, liver and kidney. Expressed at lower levels in brain and pancreas and at very low levels in the intestine and white adipose tissue. In skeletal muscle, levels were lower in obese than in lean subjects and fasting induced a 2-fold increase in levels in the skeletal muscle in obese subjects.

It is found in the nucleus. The protein localises to the PML body. The protein resides in the cytoplasm. Transcriptional coactivator for steroid receptors and nuclear receptors. Greatly increases the transcriptional activity of PPARG and thyroid hormone receptor on the uncoupling protein promoter. Can regulate key mitochondrial genes that contribute to the program of adaptive thermogenesis. Plays an essential role in metabolic reprogramming in response to dietary availability through coordination of the expression of a wide array of genes involved in glucose and fatty acid metabolism. Acts as a key regulator of gluconeogenesis: stimulates hepatic gluconeogenesis by increasing the expression of gluconeogenic enzymes, and acting together with FOXO1 to promote the fasting gluconeogenic program. Induces the expression of PERM1 in the skeletal muscle in an ESRRA-dependent manner. Also involved in the integration of the circadian rhythms and energy metabolism. Required for oscillatory expression of clock genes, such as BMAL1 and NR1D1, through the coactivation of RORA and RORC, and metabolic genes, such as PDK4 and PEPCK. The polypeptide is Peroxisome proliferator-activated receptor gamma coactivator 1-alpha (PPARGC1A) (Homo sapiens (Human)).